A 319-amino-acid chain; its full sequence is ATP-dependent 6-phosphofructokinase (319 aa).

Residue Gly11 participates in ATP binding. Residue 21–25 participates in ADP binding; that stretch reads RAVVR. Residues 72 to 73 and 102 to 105 contribute to the ATP site; these read RC and GDGS. Asp103 serves as a coordination point for Mg(2+). 125–127 is a binding site for substrate; the sequence is TID. Asp127 (proton acceptor) is an active-site residue. Arg154 is an ADP binding site. Substrate is bound by residues Arg162 and 169–171; that span reads MGR. Residues 185-187, Lys211, and 213-215 contribute to the ADP site; these read GAE and KMH. Substrate contacts are provided by residues Glu222, Arg243, and 249–252; that span reads HIQR.

It belongs to the phosphofructokinase type A (PFKA) family. ATP-dependent PFK group I subfamily. Prokaryotic clade 'B1' sub-subfamily. As to quaternary structure, homotetramer. It depends on Mg(2+) as a cofactor.

It localises to the cytoplasm. The enzyme catalyses beta-D-fructose 6-phosphate + ATP = beta-D-fructose 1,6-bisphosphate + ADP + H(+). It participates in carbohydrate degradation; glycolysis; D-glyceraldehyde 3-phosphate and glycerone phosphate from D-glucose: step 3/4. Allosterically activated by ADP and other diphosphonucleosides, and allosterically inhibited by phosphoenolpyruvate. Functionally, catalyzes the phosphorylation of D-fructose 6-phosphate to fructose 1,6-bisphosphate by ATP, the first committing step of glycolysis. This is ATP-dependent 6-phosphofructokinase from Clostridium botulinum (strain ATCC 19397 / Type A).